The sequence spans 141 residues: Nucleoside diphosphate kinase (141 aa).

ATP-binding residues include Lys-11, Phe-59, Arg-87, Thr-93, Arg-104, and Asn-114. His-117 serves as the catalytic Pros-phosphohistidine intermediate.

This sequence belongs to the NDK family. As to quaternary structure, homotetramer. The cofactor is Mg(2+).

It localises to the cytoplasm. It catalyses the reaction a 2'-deoxyribonucleoside 5'-diphosphate + ATP = a 2'-deoxyribonucleoside 5'-triphosphate + ADP. It carries out the reaction a ribonucleoside 5'-diphosphate + ATP = a ribonucleoside 5'-triphosphate + ADP. Functionally, major role in the synthesis of nucleoside triphosphates other than ATP. The ATP gamma phosphate is transferred to the NDP beta phosphate via a ping-pong mechanism, using a phosphorylated active-site intermediate. The sequence is that of Nucleoside diphosphate kinase from Vibrio campbellii (strain ATCC BAA-1116).